A 277-amino-acid chain; its full sequence is Proteasome assembly chaperone 1 (277 aa).

Belongs to the PSMG1 family. As to quaternary structure, forms a heterodimer with psmg2. In terms of processing, degraded by the proteasome upon completion of 20S proteasome maturation.

It is found in the cytoplasm. Its subcellular location is the endoplasmic reticulum. Functionally, chaperone protein which promotes assembly of the 20S proteasome as part of a heterodimer with psmg2. This is Proteasome assembly chaperone 1 from Danio rerio (Zebrafish).